We begin with the raw amino-acid sequence, 276 residues long: Phosphatidylglycerol--prolipoprotein diacylglyceryl transferase (276 aa).

Transmembrane regions (helical) follow at residues 17-37 (LAIR…LWFG), 59-79 (MLFF…VLFY), 95-115 (WEGG…MWLF), 129-149 (FIAP…FING), 176-196 (SQLY…WLFA), 202-222 (MGAV…AAEF), and 237-257 (LSMG…MVVW). Arginine 142 serves as a coordination point for a 1,2-diacyl-sn-glycero-3-phospho-(1'-sn-glycerol).

The protein belongs to the Lgt family.

The protein resides in the cell inner membrane. It carries out the reaction L-cysteinyl-[prolipoprotein] + a 1,2-diacyl-sn-glycero-3-phospho-(1'-sn-glycerol) = an S-1,2-diacyl-sn-glyceryl-L-cysteinyl-[prolipoprotein] + sn-glycerol 1-phosphate + H(+). It functions in the pathway protein modification; lipoprotein biosynthesis (diacylglyceryl transfer). Its function is as follows. Catalyzes the transfer of the diacylglyceryl group from phosphatidylglycerol to the sulfhydryl group of the N-terminal cysteine of a prolipoprotein, the first step in the formation of mature lipoproteins. This is Phosphatidylglycerol--prolipoprotein diacylglyceryl transferase from Cupriavidus pinatubonensis (strain JMP 134 / LMG 1197) (Cupriavidus necator (strain JMP 134)).